Reading from the N-terminus, the 449-residue chain is Glutamyl-tRNA reductase (449 aa).

Residues 49 to 52 (TCNR), Ser109, 114 to 116 (ETQ), and Gln120 contribute to the substrate site. Catalysis depends on Cys50, which acts as the Nucleophile. NADP(+) is bound at residue 189–194 (GAGKMS). Residues 427–449 (NFTHPREEMEESDEKRSYCGESR) are disordered.

This sequence belongs to the glutamyl-tRNA reductase family. As to quaternary structure, homodimer.

The enzyme catalyses (S)-4-amino-5-oxopentanoate + tRNA(Glu) + NADP(+) = L-glutamyl-tRNA(Glu) + NADPH + H(+). The protein operates within porphyrin-containing compound metabolism; protoporphyrin-IX biosynthesis; 5-aminolevulinate from L-glutamyl-tRNA(Glu): step 1/2. Functionally, catalyzes the NADPH-dependent reduction of glutamyl-tRNA(Glu) to glutamate 1-semialdehyde (GSA). The protein is Glutamyl-tRNA reductase of Carboxydothermus hydrogenoformans (strain ATCC BAA-161 / DSM 6008 / Z-2901).